A 432-amino-acid polypeptide reads, in one-letter code: Neuronal pentraxin-1 (432 aa).

An N-terminal signal peptide occupies residues 1–22; that stretch reads MLAGRAARTCALLALCLLGSGA. The interval 88 to 122 is disordered; the sequence is RCESQSTLDSGPGEARSGGGRKQPGSGKNTMGDLS. 2 N-linked (GlcNAc...) asparagine glycosylation sites follow: Asn154 and Asn193. In terms of domain architecture, Pentraxin (PTX) spans 226-428; the sequence is DKFQLTFPLR…GATKWTFEAC (203 aa). Cys256 and Cys316 are oxidised to a cystine. The Ca(2+) site is built by Asn280, Glu358, Gln359, Asp360, and Gln370.

In terms of assembly, homooligomer or heterooligomer (probably pentamer) with neuronal pentraxin receptor (NPTXR). The cofactor is Ca(2+). As to expression, expressed in brain and kidney.

It is found in the secreted. Its subcellular location is the cytoplasmic vesicle. The protein resides in the secretory vesicle. The protein localises to the endoplasmic reticulum. In terms of biological role, may be involved in mediating uptake of synaptic material during synapse remodeling or in mediating the synaptic clustering of AMPA glutamate receptors at a subset of excitatory synapses. This is Neuronal pentraxin-1 (Nptx1) from Mus musculus (Mouse).